We begin with the raw amino-acid sequence, 503 residues long: Aromatase 2 (503 aa).

Cys437 contributes to the heme binding site.

Belongs to the cytochrome P450 family. Heme serves as cofactor.

Its subcellular location is the membrane. It catalyses the reaction testosterone + 3 reduced [NADPH--hemoprotein reductase] + 3 O2 = 17beta-estradiol + formate + 3 oxidized [NADPH--hemoprotein reductase] + 4 H2O + 4 H(+). It carries out the reaction androst-4-ene-3,17-dione + 3 reduced [NADPH--hemoprotein reductase] + 3 O2 = estrone + formate + 3 oxidized [NADPH--hemoprotein reductase] + 4 H2O + 4 H(+). Catalyzes the formation of aromatic C18 estrogens from C19 androgens. In Sus scrofa (Pig), this protein is Aromatase 2 (CYP19A2).